The chain runs to 484 residues: Protein nucleotidyltransferase YdiU (484 aa).

8 residues coordinate ATP: Gly81, Gly83, Arg84, Lys103, Asp115, Gly116, Arg166, and Arg173. Asp244 acts as the Proton acceptor in catalysis. Residues Asn245 and Asp254 each coordinate Mg(2+). Asp254 is an ATP binding site.

The protein belongs to the SELO family. Mg(2+) is required as a cofactor. It depends on Mn(2+) as a cofactor.

The catalysed reaction is L-seryl-[protein] + ATP = 3-O-(5'-adenylyl)-L-seryl-[protein] + diphosphate. It carries out the reaction L-threonyl-[protein] + ATP = 3-O-(5'-adenylyl)-L-threonyl-[protein] + diphosphate. The enzyme catalyses L-tyrosyl-[protein] + ATP = O-(5'-adenylyl)-L-tyrosyl-[protein] + diphosphate. It catalyses the reaction L-histidyl-[protein] + UTP = N(tele)-(5'-uridylyl)-L-histidyl-[protein] + diphosphate. The catalysed reaction is L-seryl-[protein] + UTP = O-(5'-uridylyl)-L-seryl-[protein] + diphosphate. It carries out the reaction L-tyrosyl-[protein] + UTP = O-(5'-uridylyl)-L-tyrosyl-[protein] + diphosphate. In terms of biological role, nucleotidyltransferase involved in the post-translational modification of proteins. It can catalyze the addition of adenosine monophosphate (AMP) or uridine monophosphate (UMP) to a protein, resulting in modifications known as AMPylation and UMPylation. This is Protein nucleotidyltransferase YdiU from Shewanella sp. (strain MR-7).